We begin with the raw amino-acid sequence, 508 residues long: ATP synthase subunit alpha, chloroplastic (508 aa).

170 to 177 lines the ATP pocket; that stretch reads GDRQTGKT.

It belongs to the ATPase alpha/beta chains family. In terms of assembly, F-type ATPases have 2 components, CF(1) - the catalytic core - and CF(0) - the membrane proton channel. CF(1) has five subunits: alpha(3), beta(3), gamma(1), delta(1), epsilon(1). CF(0) has four main subunits: a, b, b' and c.

It localises to the plastid. It is found in the chloroplast thylakoid membrane. It catalyses the reaction ATP + H2O + 4 H(+)(in) = ADP + phosphate + 5 H(+)(out). Produces ATP from ADP in the presence of a proton gradient across the membrane. The alpha chain is a regulatory subunit. This chain is ATP synthase subunit alpha, chloroplastic, found in Lactuca sativa (Garden lettuce).